A 251-amino-acid polypeptide reads, in one-letter code: tRNA (guanine-N(1)-)-methyltransferase (251 aa).

S-adenosyl-L-methionine contacts are provided by residues glycine 113 and 133–138; that span reads MGDYVL.

The protein belongs to the RNA methyltransferase TrmD family. As to quaternary structure, homodimer.

Its subcellular location is the cytoplasm. The catalysed reaction is guanosine(37) in tRNA + S-adenosyl-L-methionine = N(1)-methylguanosine(37) in tRNA + S-adenosyl-L-homocysteine + H(+). Functionally, specifically methylates guanosine-37 in various tRNAs. In Sodalis glossinidius (strain morsitans), this protein is tRNA (guanine-N(1)-)-methyltransferase.